Consider the following 876-residue polypeptide: Alanine--tRNA ligase (876 aa).

Residues histidine 565, histidine 569, cysteine 667, and histidine 671 each coordinate Zn(2+).

It belongs to the class-II aminoacyl-tRNA synthetase family. It depends on Zn(2+) as a cofactor.

Its subcellular location is the cytoplasm. The enzyme catalyses tRNA(Ala) + L-alanine + ATP = L-alanyl-tRNA(Ala) + AMP + diphosphate. Catalyzes the attachment of alanine to tRNA(Ala) in a two-step reaction: alanine is first activated by ATP to form Ala-AMP and then transferred to the acceptor end of tRNA(Ala). Also edits incorrectly charged Ser-tRNA(Ala) and Gly-tRNA(Ala) via its editing domain. This chain is Alanine--tRNA ligase, found in Staphylococcus aureus (strain Mu3 / ATCC 700698).